A 77-amino-acid polypeptide reads, in one-letter code: Large ribosomal subunit protein uL29 (77 aa).

Belongs to the universal ribosomal protein uL29 family.

The protein is Large ribosomal subunit protein uL29 of Mycolicibacterium smegmatis (strain ATCC 700084 / mc(2)155) (Mycobacterium smegmatis).